The sequence spans 466 residues: MTAPVVTRFAPSPTGFLHIGGARTALFNWLYARGRGGKFLLRIEDTDRARSTPEATQAILDGMAWLGLDHDGDIVSQFDNAARHAAVAMELLAAGKAYKCFATQEEISAFREAARADGRSTLYRSPWRDAAQEAHPDAPFVIRIKAPQEGETIIRDQVQGDVTIRNDQLDDMVLLRSDGTPVYMLAVVVDDHDMGVTHVIRGDDHLNNAARQMMIYNALGWDVPVWAHIPLIHGPDGKKLSKRHGALGAQEYQVMGYPAAGMRNYLARLGWSHGDDEFFTDAQAREWFDLDGIGKSPARFDTKKLENLCGQHIAASQDAALRQEAEAFRAVSGQPALTASQSHMLGKAMYCIKERAKTFPELIDKAHFALTQRPVTPDAKAAKSLDNVSRGILKELTPQLQNASWERENLEAILNAFAHSKDTKFGKLAGPLRAALAGRSVTPSVFDMMLVLGPEETCARLNDAAV.

A 'HIGH' region motif is present at residues 11–21 (PSPTGFLHIGG). A 'KMSKS' region motif is present at residues 239 to 243 (KLSKR). Residue Lys-242 coordinates ATP.

This sequence belongs to the class-I aminoacyl-tRNA synthetase family. Glutamate--tRNA ligase type 1 subfamily. Monomer.

The protein localises to the cytoplasm. The catalysed reaction is tRNA(Glu) + L-glutamate + ATP = L-glutamyl-tRNA(Glu) + AMP + diphosphate. Its function is as follows. Catalyzes the attachment of glutamate to tRNA(Glu) in a two-step reaction: glutamate is first activated by ATP to form Glu-AMP and then transferred to the acceptor end of tRNA(Glu). This Roseobacter denitrificans (strain ATCC 33942 / OCh 114) (Erythrobacter sp. (strain OCh 114)) protein is Glutamate--tRNA ligase 2.